Reading from the N-terminus, the 117-residue chain is Large ribosomal subunit protein uL18 (117 aa).

This sequence belongs to the universal ribosomal protein uL18 family. As to quaternary structure, part of the 50S ribosomal subunit; part of the 5S rRNA/L5/L18/L25 subcomplex. Contacts the 5S and 23S rRNAs.

Its function is as follows. This is one of the proteins that bind and probably mediate the attachment of the 5S RNA into the large ribosomal subunit, where it forms part of the central protuberance. This is Large ribosomal subunit protein uL18 from Polynucleobacter necessarius subsp. necessarius (strain STIR1).